The following is a 61-amino-acid chain: Temporin-ALi (61 aa).

Residues 1–22 (MFPLKKSLLLLFFLATINLSLC) form the signal peptide. A propeptide spanning residues 23–46 (EQERNAEEERRDEPDERNAEVEKR) is cleaved from the precursor. Leu-59 bears the Leucine amide mark.

The protein belongs to the frog skin active peptide (FSAP) family. Temporin subfamily. Expressed by the skin glands.

The protein resides in the secreted. Functionally, antimicrobial peptide with activity against Gram-positive and Gram-negative bacteria and against fungi. Has been tested against S.aureus (MIC=7.5 ug/mL), B.pumilus (MIC=7.5 ug/mL), B.cereus (MIC=75.0 ug/mL), E.coli (MIC=7.5 ug/mL), B.dysenteriae (MIC=20.0 ug/mL), A.cacoaceticus (MIC=60.0 ug/mL), P.aeruginosa (MIC=5.0 ug/mL) and C.albicans (MIC=5.0 ug/mL). Also shows a weak hemolytic activity. The protein is Temporin-ALi of Amolops loloensis (Lolokou Sucker Frog).